The sequence spans 605 residues: uncharacterized protein (605 aa).

Disordered stretches follow at residues 10–78 (RRGG…FPPA) and 216–248 (RAPD…VRNP). A compositionally biased stretch (low complexity) spans 20–48 (AGGRPAAGGRPAAGGRPAAGSRAAAGAAG). Pro residues predominate over residues 220–233 (CPSPRTPMVKPPFR).

This is an uncharacterized protein from Dryophytes versicolor (chameleon treefrog).